Consider the following 265-residue polypeptide: Phosphonoacetaldehyde hydrolase (265 aa).

Asp10 (nucleophile) is an active-site residue. Mg(2+)-binding residues include Asp10 and Ala12. The active-site Schiff-base intermediate with substrate is Lys51. Position 184 (Asp184) interacts with Mg(2+).

This sequence belongs to the HAD-like hydrolase superfamily. PhnX family. Homodimer. Mg(2+) is required as a cofactor.

The catalysed reaction is phosphonoacetaldehyde + H2O = acetaldehyde + phosphate + H(+). Functionally, involved in phosphonate degradation. The polypeptide is Phosphonoacetaldehyde hydrolase (Latilactobacillus sakei subsp. sakei (strain 23K) (Lactobacillus sakei subsp. sakei)).